A 184-amino-acid chain; its full sequence is Tyrosine-protein kinase receptor Tie-1 (184 aa).

One can recognise a Protein kinase domain in the interval 1–164; sequence QLLQFAADVA…RMQEARKAYV (164 aa). Asp25 functions as the Proton acceptor in the catalytic mechanism. Tyr53 is subject to Phosphotyrosine; by autocatalysis.

The protein belongs to the protein kinase superfamily. Tyr protein kinase family. Tie subfamily. Interacts with svep1. Expressed in most populations of endothelial cells in 24 hours embryos, including the endocardium.

It is found in the cell membrane. It catalyses the reaction L-tyrosyl-[protein] + ATP = O-phospho-L-tyrosyl-[protein] + ADP + H(+). Transmembrane tyrosine-protein kinase. Required for the formation of facial lymphatic structures and brain lymphatic endothelial cells. Also required for embryonic ventral and dorsal migration of parachordal lymphoblasts along the arterial intersegmental vessel. Plays a role in the embryonic formation of the dorsal longitudinal anastomotic vessel. This Danio rerio (Zebrafish) protein is Tyrosine-protein kinase receptor Tie-1 (tie1).